Reading from the N-terminus, the 66-residue chain is Phylloseptin-Az3 (66 aa).

The first 22 residues, 1–22 (MAFLKKSLFLVLFLGLVSLSIC), serve as a signal peptide directing secretion. Residues 23 to 44 (EEEKRETEEEEYNQEDDDKSEE) constitute a propeptide that is removed on maturation. A Phenylalanine amide modification is found at Phe-65.

Expressed by the skin glands.

The protein localises to the secreted. In terms of biological role, has antimicrobial activity. This is Phylloseptin-Az3 from Pithecopus azureus (Orange-legged monkey tree frog).